A 246-amino-acid polypeptide reads, in one-letter code: Acetoacetate decarboxylase (246 aa).

The active-site Schiff-base intermediate with acetoacetate is lysine 116.

The protein belongs to the ADC family. As to quaternary structure, homododecamer.

It catalyses the reaction acetoacetate + H(+) = acetone + CO2. Its function is as follows. Catalyzes the conversion of acetoacetate to acetone and carbon dioxide. This is Acetoacetate decarboxylase from Chromobacterium violaceum (strain ATCC 12472 / DSM 30191 / JCM 1249 / CCUG 213 / NBRC 12614 / NCIMB 9131 / NCTC 9757 / MK).